Here is an 866-residue protein sequence, read N- to C-terminus: Probable LRR receptor-like serine/threonine-protein kinase At5g16900 (866 aa).

An N-terminal signal peptide occupies residues 1-20; that stretch reads MEDRHRYLFFIFAIIHYVQA. Residues 21–515 are Extracellular-facing; the sequence is QQGFISLDCG…SSSGNKETTV (495 aa). N-linked (GlcNAc...) asparagine glycosylation is found at Asn137, Asn176, Asn230, Asn251, Asn331, Asn404, Asn409, and Asn436. LRR repeat units follow at residues 415–438, 439–461, and 463–485; these read RIIS…QNLT, QLQK…LANM, and SLLF…LLDR. N-linked (GlcNAc...) asparagine glycans are attached at residues Asn468 and Asn505. A helical membrane pass occupies residues 516-536; that stretch reads IAPVAAAIAIFIAVLVLIIVF. Topologically, residues 537 to 866 are cytoplasmic; the sequence is IKKRPSSIRA…LNQVIDSKSS (330 aa). At Thr564 the chain carries Phosphothreonine. The Protein kinase domain occupies 573 to 846; it reads NNFERVIGEG…HVVQELKQCI (274 aa). Residues 579–587 and Lys601 each bind ATP; that span reads IGEGGFGVV. Tyr646 carries the phosphotyrosine modification. Asp698 acts as the Proton acceptor in catalysis. Ser732 bears the Phosphoserine mark. Phosphothreonine occurs at positions 733 and 738. At Tyr746 the chain carries Phosphotyrosine.

Belongs to the protein kinase superfamily. Ser/Thr protein kinase family.

It is found in the membrane. The enzyme catalyses L-seryl-[protein] + ATP = O-phospho-L-seryl-[protein] + ADP + H(+). The catalysed reaction is L-threonyl-[protein] + ATP = O-phospho-L-threonyl-[protein] + ADP + H(+). This Arabidopsis thaliana (Mouse-ear cress) protein is Probable LRR receptor-like serine/threonine-protein kinase At5g16900.